The sequence spans 123 residues: Ribosome-binding factor A (123 aa).

The protein belongs to the RbfA family. In terms of assembly, monomer. Binds 30S ribosomal subunits, but not 50S ribosomal subunits or 70S ribosomes.

The protein resides in the cytoplasm. One of several proteins that assist in the late maturation steps of the functional core of the 30S ribosomal subunit. Associates with free 30S ribosomal subunits (but not with 30S subunits that are part of 70S ribosomes or polysomes). Required for efficient processing of 16S rRNA. May interact with the 5'-terminal helix region of 16S rRNA. The sequence is that of Ribosome-binding factor A from Neisseria meningitidis serogroup C (strain 053442).